Reading from the N-terminus, the 64-residue chain is Large ribosomal subunit protein bL28 (64 aa).

Belongs to the bacterial ribosomal protein bL28 family.

This is Large ribosomal subunit protein bL28 from Campylobacter jejuni subsp. doylei (strain ATCC BAA-1458 / RM4099 / 269.97).